The primary structure comprises 1958 residues: Sodium channel protein type 10 subunit alpha (1958 aa).

The Cytoplasmic segment spans residues 1–125 (MEFPFGSVGT…FNLIRRTAIK (125 aa)). The segment at 27-54 (QIAAHRAAKKGRPKQRGQKDKSEKPRPQ) is disordered. Positions 32–42 (RAAKKGRPKQR) are enriched in basic residues. The segment covering 43–54 (GQKDKSEKPRPQ) has biased composition (basic and acidic residues). Residues 116–404 (FNLIRRTAIK…VTMAYEEQSQ (289 aa)) form an I repeat. A helical transmembrane segment spans residues 126-149 (VSVHSWFSIFITVTILVNCVCMTR). Residues 150 to 154 (TDLPE) are Extracellular-facing. A helical transmembrane segment spans residues 155–174 (KLEYAFTVVYTFEALIKILA). At 175 to 187 (RGFCLNEFTYLRD) the chain is on the cytoplasmic side. A helical membrane pass occupies residues 188-206 (PWNWLDFSVITLAYVGAAI). The Extracellular portion of the chain corresponds to 207 to 212 (DLRGIS). The chain crosses the membrane as a helical; Voltage-sensor span at residues 213-232 (GLRTFRVLRALKTVSVIPGL). The Cytoplasmic segment spans residues 233-248 (KVIVGALIHSVRKLAD). A helical membrane pass occupies residues 249-272 (VTILTVFCLSVFALVGLQLFKGNL). Over 273–340 (KNKCIKNGTD…PDFNYTSFDS (68 aa)) the chain is Extracellular. A disulfide bond links Cys-276 and Cys-318. N-linked (GlcNAc...) asparagine glycans are attached at residues Asn-279, Asn-288, Asn-311, and Asn-334. An intramembrane region (pore-forming) is located at residues 341-365 (FAWAFLSLFRLMTQDSWERLYQQTL). Topologically, residues 366 to 372 (RASGKMY) are extracellular. A helical membrane pass occupies residues 373-398 (MVFFVLVIFLGSFYLVNLILAVVTMA). The Cytoplasmic segment spans residues 399-658 (YEEQSQATIA…KWKKFKMVLF (260 aa)). Ser-440, Ser-443, Ser-466, and Ser-478 each carry phosphoserine. Disordered regions lie at residues 444–483 (HNGSPLAPKNANERRPRVKSRMSEGSTDDNRSLQSDPYNQ) and 539–583 (GRGA…APEG). Pro residues predominate over residues 549-560 (PRSPLPQSPNPG). Residues Ser-611 and Ser-614 each carry the phosphoserine modification. An II repeat occupies 646-910 (CCPKWKKFKM…EDDGEVNNLQ (265 aa)). A helical membrane pass occupies residues 659–683 (ELVTDPFAELTITLCIVVNTVFMAM). Topologically, residues 684–694 (EHYPMTDAFDA) are extracellular. Residues 695–718 (MLQAGNIVFTVFFTMEMAFKIIAF) traverse the membrane as a helical segment. Residues 719-726 (DPYYYFQK) lie on the Cytoplasmic side of the membrane. A helical transmembrane segment spans residues 727 to 746 (KWNIFDCVIVTVSLLELSTS). At 747 to 752 (KKGSLS) the chain is on the extracellular side. A helical; Voltage-sensor transmembrane segment spans residues 753-772 (VLRTFRLLRVFKLAKSWPTL). Over 773–788 (NMLIKIIGNSVGALGN) the chain is Cytoplasmic. Residues 789–809 (LTFILAIIVFIFALVGKQLLS) traverse the membrane as a helical segment. Topologically, residues 810 to 833 (ENYGCRRDGISVWNGERLRWHMCD) are extracellular. The segment at residues 834–854 (FFHSFLVVFRILCGEWIENMW) is an intramembrane region (pore-forming). Over 855-863 (VCMEVSQDY) the chain is Extracellular. Cys-856 and Cys-865 are joined by a disulfide. A helical membrane pass occupies residues 864–889 (ICLTLFLTVMVLGNLVVLNLFIALLL). Residues 890–1148 (NSFSADNLTA…GWQVRKTCYR (259 aa)) lie on the Cytoplasmic side of the membrane. The tract at residues 1006–1094 (DLDELEEDVE…SEGSTVDCPD (89 aa)) is disordered. A compositionally biased stretch (polar residues) spans 1017–1038 (ASQSSWQEESPKGQQELLQQVQ). One copy of the III repeat lies at 1141–1450 (QVRKTCYRIV…KKYYNAMKKL (310 aa)). Residues 1149 to 1172 (IVEHSWFESFIIFMILLSSGALAF) traverse the membrane as a helical segment. Residues 1173–1185 (EDNYLEEKPRVKS) lie on the Extracellular side of the membrane. Residues 1186–1211 (VLEYTDRVFTFIFVFEMLLKWVAYGF) traverse the membrane as a helical segment. Residues 1212–1217 (KKYFTN) are Cytoplasmic-facing. The helical transmembrane segment at 1218–1239 (AWCWLDFLIVNISLTSLIAKIL) threads the bilayer. Over 1240-1243 (EYSD) the chain is Extracellular. The chain crosses the membrane as a helical; Voltage-sensor span at residues 1244 to 1265 (VASIKALRTLRALRPLRALSRF). Residues 1266–1284 (EGMRVVVDALVGAIPSIMN) lie on the Cytoplasmic side of the membrane. A helical transmembrane segment spans residues 1285–1312 (VLLVCLIFWLIFSIMGVNLFAGKFSRCV). Residues 1313–1354 (DTRSNPFSVVNSTFVTNKSDCYNQNNTGHFFWVNVKVNFDNV) lie on the Extracellular side of the membrane. Residues Asn-1323, Asn-1329, and Asn-1337 are each glycosylated (N-linked (GlcNAc...) asparagine). The segment at residues 1355–1376 (AMGYLALLQVATFKGWMDIMYA) is an intramembrane region (pore-forming). The Extracellular portion of the chain corresponds to 1377 to 1392 (AVDSRDINSQPNWEES). Residues 1393 to 1419 (LYMYLYFVVFIIFGGFFTLNLFVGVII) traverse the membrane as a helical segment. Residues 1420–1472 (DNFNQQKKKLGGQDIFMTEEQKKYYNAMKKLGSKKPQKPIPRPLNKYQGFVFD) lie on the Cytoplasmic side of the membrane. Ser-1452 carries the phosphoserine; by PKC modification. The IV repeat unit spans residues 1459–1758 (IPRPLNKYQG…WEKFDPEATQ (300 aa)). Residues 1473–1496 (IVTRQAFDIIIMALICLNMITMMV) form a helical membrane-spanning segment. Residues 1497 to 1507 (ETDNQSEEKTK) lie on the Extracellular side of the membrane. Asn-1500 carries N-linked (GlcNAc...) asparagine glycosylation. The chain crosses the membrane as a helical span at residues 1508–1531 (VLGRINQFFVAVFTGECVMKMFAL). Residues 1532 to 1537 (RQYYFT) are Cytoplasmic-facing. The helical transmembrane segment at 1538 to 1561 (NGWNVFDFIVVILSISSLLFSAIL) threads the bilayer. At 1562–1573 (SSLESYFSPTLL) the chain is on the extracellular side. Residues 1574 to 1595 (RVIRLARIGRILRLIRAAKGIR) form a helical; Voltage-sensor membrane-spanning segment. Residues 1596 to 1610 (TLLFALMMSLPALFN) lie on the Cytoplasmic side of the membrane. Residues 1611–1633 (IGLLLFLVMFIYSIFGMASFANV) traverse the membrane as a helical segment. The Extracellular portion of the chain corresponds to 1634-1647 (IDEAGIDDMFNFKT). The segment at residues 1648–1670 (FGNSMLCLFQITTSAGWDGLLSP) is an intramembrane region (pore-forming). Residues 1671-1698 (ILNTGPPYCDPNRPNSNGSKGNCGSPAV) lie on the Extracellular side of the membrane. Residue Asn-1687 is glycosylated (N-linked (GlcNAc...) asparagine). Residues 1699–1723 (GILFFTTYIIISFLIVVNMYIAVIL) form a helical membrane-spanning segment. Residues 1724–1958 (ENFNVATEES…AKEGKSPGPQ (235 aa)) lie on the Cytoplasmic side of the membrane. Positions 1852–1881 (EDISATIIQKAYRNYMLQRSLMLSNPLHVP) constitute an IQ domain. The interval 1901-1958 (NDNGGLPDKSETASATSFPPSYDSVTRGLSDRANISTSSSMQNEDEVTAKEGKSPGPQ) is disordered. Positions 1933 to 1942 (ANISTSSSMQ) are enriched in polar residues. Basic and acidic residues predominate over residues 1947-1958 (VTAKEGKSPGPQ).

Belongs to the sodium channel (TC 1.A.1.10) family. Nav1.8/SCN10A subfamily. The channel consists of an ion conducting pore forming alpha-subunit regulated by one or more associated auxiliary subunits SCN1B, SCN2B and SCN3B; electrophysiological properties may vary depending on the type of the associated beta subunits. Found in a number of complexes with PRX, DYNLT1 and PDZD2. Interacts with proteins such as FSTL1, PRX, DYNLT1, PDZD2, S100A10 and many others. Interacts with NEDD4 and NEDD4L. In terms of processing, ubiquitinated by NEDD4L; which promotes its endocytosis. Post-translationally, phosphorylation at Ser-1452 by PKC in a highly conserved cytoplasmic loop slows inactivation of the sodium channel and reduces peak sodium currents. Lacks the cysteine which covalently binds the conotoxin GVIIJ. This cysteine (position 815) is speculated in other sodium channel subunits alpha to be implied in covalent binding with the sodium channel subunit beta-2 or beta-4. As to expression, expressed in dorsal root ganglion and trigeminal ganglion.

The protein resides in the cell membrane. It carries out the reaction Na(+)(in) = Na(+)(out). Functionally, tetrodotoxin-resistant channel that mediates the voltage-dependent sodium ion permeability of excitable membranes. Assuming opened or closed conformations in response to the voltage difference across the membrane, the protein forms a sodium-selective channel through which sodium ions may pass in accordance with their electrochemical gradient. Plays a role in neuropathic pain mechanisms. In Mus musculus (Mouse), this protein is Sodium channel protein type 10 subunit alpha.